The sequence spans 651 residues: Acetyl-coenzyme A synthetase (651 aa).

CoA-binding positions include 189-192 (RGGK), Thr-311, and Asn-335. ATP-binding positions include 387–389 (GEP), 411–416 (DTWWQT), Asp-500, and Arg-515. Ser-523 provides a ligand contact to CoA. An ATP-binding site is contributed by Arg-526. The Mg(2+) site is built by Val-537, His-539, and Val-542. CoA is bound at residue Arg-584. Lys-609 is modified (N6-acetyllysine).

It belongs to the ATP-dependent AMP-binding enzyme family. Requires Mg(2+) as cofactor. Acetylated. Deacetylation by the SIR2-homolog deacetylase activates the enzyme.

The catalysed reaction is acetate + ATP + CoA = acetyl-CoA + AMP + diphosphate. Its function is as follows. Catalyzes the conversion of acetate into acetyl-CoA (AcCoA), an essential intermediate at the junction of anabolic and catabolic pathways. AcsA undergoes a two-step reaction. In the first half reaction, AcsA combines acetate with ATP to form acetyl-adenylate (AcAMP) intermediate. In the second half reaction, it can then transfer the acetyl group from AcAMP to the sulfhydryl group of CoA, forming the product AcCoA. The protein is Acetyl-coenzyme A synthetase of Agrobacterium fabrum (strain C58 / ATCC 33970) (Agrobacterium tumefaciens (strain C58)).